Here is a 413-residue protein sequence, read N- to C-terminus: Putative F-box protein At3g17560 (413 aa).

One can recognise an F-box domain in the interval 9–55; sequence TKLLFDLPQDVIEEIFSKVPVTCLRRIRSTCKRLYALLKDRGFIRKH.

The polypeptide is Putative F-box protein At3g17560 (Arabidopsis thaliana (Mouse-ear cress)).